Consider the following 86-residue polypeptide: UPF0147 protein PYRAB16980 (86 aa).

The protein belongs to the UPF0147 family.

In Pyrococcus abyssi (strain GE5 / Orsay), this protein is UPF0147 protein PYRAB16980.